The primary structure comprises 256 residues: UPF0246 protein SPO0106 (256 aa).

This sequence belongs to the UPF0246 family.

This is UPF0246 protein SPO0106 from Ruegeria pomeroyi (strain ATCC 700808 / DSM 15171 / DSS-3) (Silicibacter pomeroyi).